Consider the following 311-residue polypeptide: Olfactory receptor 2M4 (311 aa).

The Extracellular segment spans residues 1 to 25 (MVWENQTFNSIFILLGIFNHSPTHT). A glycan (N-linked (GlcNAc...) asparagine) is linked at asparagine 5. Residues 26 to 49 (FLFSLVLGIFSLALMENISMVLLI) form a helical membrane-spanning segment. Residues 50 to 57 (YIEKQLHT) lie on the Cytoplasmic side of the membrane. A helical membrane pass occupies residues 58-79 (PMYFLLSQLSLMDLMLICTTLP). The Extracellular portion of the chain corresponds to 80–100 (KMIFSYLSGKKSISLAGCGTQ). Cysteine 97 and cysteine 189 form a disulfide bridge. Residues 101–120 (IFFYVSLLGAECFLLAVMAY) traverse the membrane as a helical segment. Residues 121–139 (DRYVAICHPLQYTILMNPK) are Cytoplasmic-facing. The chain crosses the membrane as a helical span at residues 140–158 (LCVFMTVASWTLGSLDGII). Residues 159–195 (VLAAVLSFSYCSSLEIHHFFCDVAALLPLSCTETSAF) lie on the Extracellular side of the membrane. The chain crosses the membrane as a helical span at residues 196–219 (ERLLVICCVVMLIFPVSVIILSYS). The Cytoplasmic segment spans residues 220–236 (HVLRAVIHMGSGESRRK). Residues 237–259 (AFTTCSSHLSVVGLYYGAAMFMY) form a helical membrane-spanning segment. Residues 260 to 272 (MRPASKHTPDQDK) are Extracellular-facing. The helical transmembrane segment at 273–292 (MVSAFYTILTPMLNPLIYSL) threads the bilayer. Topologically, residues 293–311 (RNKEVFRALQKVLKKRKLI) are cytoplasmic.

This sequence belongs to the G-protein coupled receptor 1 family.

The protein resides in the cell membrane. Odorant receptor. The protein is Olfactory receptor 2M4 (OR2M4) of Homo sapiens (Human).